Reading from the N-terminus, the 470-residue chain is MTVPINASTSQDVEAPPRPKDVGILAIEMYFPKRCISEEELEAFDSVSKGKYTIGLGQKFMACCDDREDINTFALTAMTSLIEKYNVDPKSIGRIDVGTETIIDKSKSTKTHLMDYFAEAGNTDVEGVDSKNACYGSTAALFNAVNWIESSSWDGRNAIVVGGDIAIYAEGSGRPTGGAGAVAMLIGPNAPLVLEPIHGTHMANTYDFYKPKLDSEYPEVDGQLSITTYISAIDASYAAYRAKHAKAKKAAGLGGPAFSLADVDYPVFHSPYGKMVQKAHARLVYNDFLANPDAPRYAQVPERAAWLAQPYKASLTDKTLEKTFMGVAKAQFDGTVEKGMRCARRCGNMYTASLYGGLASLLASVEPAEIRGKRISMFAFGSGLASSFFTIKVKGDTTEVQEKLDLIRRLESMDVVPCQAYVDSLALREKNHNAGSYVPEGSIDNIWPGGYYLESIDSKYRRKYIRAPKA.

E100 (proton donor/acceptor) is an active-site residue. C134 (acyl-thioester intermediate) is an active-site residue. Residues C134, T176, S225, H269, K278, N348, and S382 each contribute to the (3S)-3-hydroxy-3-methylglutaryl-CoA site. Residue H269 is the Proton donor/acceptor of the active site.

This sequence belongs to the thiolase-like superfamily. HMG-CoA synthase family.

The enzyme catalyses acetoacetyl-CoA + acetyl-CoA + H2O = (3S)-3-hydroxy-3-methylglutaryl-CoA + CoA + H(+). Its pathway is metabolic intermediate biosynthesis; (R)-mevalonate biosynthesis; (R)-mevalonate from acetyl-CoA: step 2/3. Hydroxymethylglutaryl-CoA synthase; part of the first module of ergosterol biosynthesis pathway that includes the early steps of the pathway, conserved across all eukaryotes, and which results in the formation of mevalonate from acetyl-coenzyme A (acetyl-CoA). This module also plays a key role in the biosynthesis of triterpenes such as ganoderic acids (GA), a group of highly oxygenated lanostane-type triterpenoids which are well recognized as a main group of unique bioactive compounds in the medicinal mushroom Ganoderma lucidum. In this module, the acetyl-CoA acetyltransferase catalyzes the formation of acetoacetyl-CoA. The hydroxymethylglutaryl-CoA synthase HMGS then condenses acetyl-CoA with acetoacetyl-CoA to form HMG-CoA. The rate-limiting step of the early module is the reduction to mevalonate by the 3-hydroxy-3-methylglutaryl-coenzyme A (HMG-CoA) reductase. The chain is Hydroxymethylglutaryl-CoA synthase from Ganoderma lucidum (Ling zhi medicinal fungus).